The primary structure comprises 152 residues: Endoribonuclease YbeY (152 aa).

The Zn(2+) site is built by H113, H117, and H123.

Belongs to the endoribonuclease YbeY family. Zn(2+) serves as cofactor.

The protein localises to the cytoplasm. In terms of biological role, single strand-specific metallo-endoribonuclease involved in late-stage 70S ribosome quality control and in maturation of the 3' terminus of the 16S rRNA. This chain is Endoribonuclease YbeY, found in Wolbachia pipientis subsp. Culex pipiens (strain wPip).